The primary structure comprises 269 residues: Imidazole glycerol phosphate synthase subunit HisF (269 aa).

Residues Asp23 and Asp142 contribute to the active site.

This sequence belongs to the HisA/HisF family. Heterodimer of HisH and HisF.

The protein localises to the cytoplasm. The catalysed reaction is 5-[(5-phospho-1-deoxy-D-ribulos-1-ylimino)methylamino]-1-(5-phospho-beta-D-ribosyl)imidazole-4-carboxamide + L-glutamine = D-erythro-1-(imidazol-4-yl)glycerol 3-phosphate + 5-amino-1-(5-phospho-beta-D-ribosyl)imidazole-4-carboxamide + L-glutamate + H(+). It participates in amino-acid biosynthesis; L-histidine biosynthesis; L-histidine from 5-phospho-alpha-D-ribose 1-diphosphate: step 5/9. In terms of biological role, IGPS catalyzes the conversion of PRFAR and glutamine to IGP, AICAR and glutamate. The HisF subunit catalyzes the cyclization activity that produces IGP and AICAR from PRFAR using the ammonia provided by the HisH subunit. This chain is Imidazole glycerol phosphate synthase subunit HisF, found in Bordetella parapertussis (strain 12822 / ATCC BAA-587 / NCTC 13253).